We begin with the raw amino-acid sequence, 237 residues long: Protein XpsM (237 aa).

Residues 1–21 (MPAATWTASPSPPNWPVPMPR) form a disordered region. Positions 10–21 (PSPPNWPVPMPR) are enriched in pro residues.

The protein is Protein XpsM (xpsM) of Xanthomonas campestris pv. campestris (strain ATCC 33913 / DSM 3586 / NCPPB 528 / LMG 568 / P 25).